The sequence spans 240 residues: MIQIIPAIDIIDGKCVRLTQGDYNQKKEYHSNPVEVAKMFEDAGIQRLHLVDLDGAKKKQIVNYKVLENITAATKLSVDFGGGLQSDEDLKIAFDAGARQITAGSIAVKNPEKVQHWLTQFGKECIILGADTKSGMIAVHGWQETSDLSIQQLMNQFIPFGISYSICTDVAKDGLLQGPSFDLYKQLNEEFKQINWIASGGVAELADIEKLNDMGIYGVIVGKAFYEGRITLQQLAQFNA.

The active-site Proton acceptor is Asp9. Asp131 acts as the Proton donor in catalysis.

It belongs to the HisA/HisF family.

Its subcellular location is the cytoplasm. It carries out the reaction 1-(5-phospho-beta-D-ribosyl)-5-[(5-phospho-beta-D-ribosylamino)methylideneamino]imidazole-4-carboxamide = 5-[(5-phospho-1-deoxy-D-ribulos-1-ylimino)methylamino]-1-(5-phospho-beta-D-ribosyl)imidazole-4-carboxamide. Its pathway is amino-acid biosynthesis; L-histidine biosynthesis; L-histidine from 5-phospho-alpha-D-ribose 1-diphosphate: step 4/9. The protein is 1-(5-phosphoribosyl)-5-[(5-phosphoribosylamino)methylideneamino] imidazole-4-carboxamide isomerase of Cytophaga hutchinsonii (strain ATCC 33406 / DSM 1761 / CIP 103989 / NBRC 15051 / NCIMB 9469 / D465).